We begin with the raw amino-acid sequence, 417 residues long: Vacuolar cation/proton exchanger 3 (417 aa).

The Cytoplasmic portion of the chain corresponds to 1-45 (MENPQIEMGAFKANGPQLQNGGLRSSMVQSWNLQRFVESALRSIR). A helical transmembrane segment spans residues 46-66 (IVIFTSKLNLLLPFGPASIIL). Residues 67 to 73 (HYTTSRH) lie on the Extracellular side of the membrane. The chain crosses the membrane as a helical span at residues 74–94 (GLVFLFSMLGITPLAERLGYA). At 95–105 (TEQLAIYTGPT) the chain is on the cytoplasmic side. A helical membrane pass occupies residues 106-126 (VGGLLNATFGNATEMIIAIYA). The tract at residues 115-150 (GNATEMIIAIYALKNGMIRVVQQSLLGSILSNMLLV) is cation selection. Topologically, residues 127-140 (LKNGMIRVVQQSLL) are extracellular. A helical membrane pass occupies residues 141-161 (GSILSNMLLVMGCAFFAGGIV). The Cytoplasmic segment spans residues 162 to 173 (HRNKDQVFSKAT). A helical transmembrane segment spans residues 174-194 (AVVNSGLLLMAVMGLMFPAVL). Over 195-207 (HFTHSEVRQGASE) the chain is Extracellular. A helical membrane pass occupies residues 208-230 (VSLSRFSSCIMLVAYASYLYFQL). Over 231–258 (SGRNNAYSPIGSEEMPNEDAAEEDEESE) the chain is Cytoplasmic. A helical transmembrane segment spans residues 259-279 (IGMWESIAWLAMLTLWVSILS). Residues 280–291 (EYLVNAIEGASD) are Extracellular-facing. Residues 292-312 (SLNLPVAFISVILLPIVGNAA) form a helical membrane-spanning segment. The tract at residues 309–344 (GNAAEHASAIMFAMKDKLDITLGVAIGSSTQISMFV) is cation selection. Over 313–330 (EHASAIMFAMKDKLDITL) the chain is Cytoplasmic. A helical transmembrane segment spans residues 331–351 (GVAIGSSTQISMFVIPFCVVI). Over 352 to 360 (GWMMGQKMD) the chain is Extracellular. The chain crosses the membrane as a helical span at residues 361-381 (LNFQLFETATLFITVLVVAFM). At 382–389 (LQDGVANY) the chain is on the cytoplasmic side. Residues 390 to 410 (LKGLMLILCYLIVAASFFVHV) form a helical membrane-spanning segment. At 411–417 (DPQSSDD) the chain is on the extracellular side.

The protein belongs to the Ca(2+):cation antiporter (CaCA) (TC 2.A.19) family. Cation/proton exchanger (CAX) subfamily. As to expression, ubiquitous.

The protein localises to the vacuole membrane. Vacuolar cation/proton exchanger (CAX). Translocates Ca(2+) and other metal ions into vacuoles using the proton gradient formed by H(+)-ATPase and H(+)-pyrophosphatase. The sequence is that of Vacuolar cation/proton exchanger 3 (CAX3) from Oryza sativa subsp. japonica (Rice).